Here is a 316-residue protein sequence, read N- to C-terminus: Ribosomal protein L11 methyltransferase (316 aa).

Residues Thr-157, Gly-178, Asp-200, and Asn-243 each coordinate S-adenosyl-L-methionine.

It belongs to the methyltransferase superfamily. PrmA family.

Its subcellular location is the cytoplasm. It carries out the reaction L-lysyl-[protein] + 3 S-adenosyl-L-methionine = N(6),N(6),N(6)-trimethyl-L-lysyl-[protein] + 3 S-adenosyl-L-homocysteine + 3 H(+). Methylates ribosomal protein L11. The chain is Ribosomal protein L11 methyltransferase from Streptococcus pneumoniae (strain JJA).